Consider the following 110-residue polypeptide: MKLKKKFLEKSKKIAEERIDILMNLAEKESKDGKTDRSKNYVVLGKKIAMRMRMPYPKEWKRRICKNCGSFLIYGKNSRVRTKAKNYPHVVITCLECNSITRIPIKTEKK.

Residues C65, C68, C94, and C97 each contribute to the Zn(2+) site.

This sequence belongs to the eukaryotic/archaeal RNase P protein component 4 family. As to quaternary structure, consists of a catalytic RNA component and at least 4-5 protein subunits. It depends on Zn(2+) as a cofactor.

It is found in the cytoplasm. It carries out the reaction Endonucleolytic cleavage of RNA, removing 5'-extranucleotides from tRNA precursor.. Its function is as follows. Part of ribonuclease P, a protein complex that generates mature tRNA molecules by cleaving their 5'-ends. This Methanococcus maripaludis (strain C7 / ATCC BAA-1331) protein is Ribonuclease P protein component 4.